The following is a 117-amino-acid chain: Protein OPG035 (117 aa).

Belongs to the poxviridae OPG035 family.

Functionally, bcl-2-like protein which contributes to virulence by preventing host NF-kappa-B activation in response to pro-inflammatory stimuli such as TNF-alpha or IL1B. In Homo sapiens (Human), this protein is Protein OPG035 (OPG035).